The chain runs to 126 residues: Desulfoferrodoxin (126 aa).

Residues C10, C13, C29, C30, H49, H69, H75, C116, and H119 each coordinate Fe cation.

Belongs to the desulfoferrodoxin family. Homodimer. The cofactor is Fe(3+). Cu(2+) is required as a cofactor.

The catalysed reaction is reduced [rubredoxin] + superoxide + 2 H(+) = oxidized [rubredoxin] + H2O2. Its function is as follows. Catalyzes the one-electron reduction of superoxide anion radical to hydrogen peroxide at a nonheme ferrous iron center. Plays a fundamental role in case of oxidative stress via its superoxide detoxification activity. The sequence is that of Desulfoferrodoxin (dfx) from Desulfarculus baarsii (strain ATCC 33931 / DSM 2075 / LMG 7858 / VKM B-1802 / 2st14).